We begin with the raw amino-acid sequence, 129 residues long: Small ribosomal subunit protein uS11 (129 aa).

It belongs to the universal ribosomal protein uS11 family. As to quaternary structure, part of the 30S ribosomal subunit. Interacts with proteins S7 and S18. Binds to IF-3.

In terms of biological role, located on the platform of the 30S subunit, it bridges several disparate RNA helices of the 16S rRNA. Forms part of the Shine-Dalgarno cleft in the 70S ribosome. The chain is Small ribosomal subunit protein uS11 from Francisella tularensis subsp. holarctica (strain FTNF002-00 / FTA).